Consider the following 355-residue polypeptide: Galactoside 2-alpha-L-fucosyltransferase (355 aa).

Residues 1-15 (MRNVKGLFSYMTKTK) lie on the Cytoplasmic side of the membrane. A helical; Signal-anchor for type II membrane protein membrane pass occupies residues 16 to 36 (SFYISIIVIIFIIFIVNRMGP). Topologically, residues 37–355 (RNYNYKQIGT…MSRNGSIISK (319 aa)) are lumenal. N-linked (GlcNAc...) asparagine glycosylation is found at asparagine 92, asparagine 311, and asparagine 349.

Belongs to the glycosyltransferase 11 family. Expression is restricted to the 20 intestinal cells in larvae and adult.

It localises to the golgi apparatus. The protein resides in the golgi stack membrane. It participates in protein modification; protein glycosylation. Functionally, selectively catalyzes the addition of fucose in alpha 1-2 linkage to Gal-beta-(1-&gt;4)-Xyl-beta-R, Gal-beta-(1-&gt;6)-GlcNAc-R, Gal-beta-(1-&gt;3)-Gal-beta-(1-&gt;4)-Glc and Gal-beta-(1-&gt;3)-Gal-beta-(1-&gt;4)-Xyl-R acceptors but not Gal-beta-(1-&gt;3)-GlcNAc-beta-(1-&gt;3)-Gal-beta-(1-&gt;4)-Glc. Unlike in mammals, unable to fucosylate Gal-beta-(1-&gt;4)-Glc-beta-R. The protein is Galactoside 2-alpha-L-fucosyltransferase of Caenorhabditis elegans.